Reading from the N-terminus, the 220-residue chain is Small ribosomal subunit protein uS3 (220 aa).

Positions 43–111 (IRSYLTKTLD…QVQLNILEVK (69 aa)) constitute a KH type-2 domain.

The protein belongs to the universal ribosomal protein uS3 family. In terms of assembly, part of the 30S ribosomal subunit. Forms a tight complex with proteins S10 and S14.

Its function is as follows. Binds the lower part of the 30S subunit head. Binds mRNA in the 70S ribosome, positioning it for translation. The sequence is that of Small ribosomal subunit protein uS3 from Tropheryma whipplei (strain TW08/27) (Whipple's bacillus).